The chain runs to 201 residues: Large ribosomal subunit protein uL4 (201 aa).

Residues 39-72 (KRQGTSAQKSRSEVIGSGKKPWRQKGTGRARAGS) form a disordered region.

This sequence belongs to the universal ribosomal protein uL4 family. As to quaternary structure, part of the 50S ribosomal subunit.

In terms of biological role, one of the primary rRNA binding proteins, this protein initially binds near the 5'-end of the 23S rRNA. It is important during the early stages of 50S assembly. It makes multiple contacts with different domains of the 23S rRNA in the assembled 50S subunit and ribosome. Its function is as follows. Forms part of the polypeptide exit tunnel. In Wigglesworthia glossinidia brevipalpis, this protein is Large ribosomal subunit protein uL4.